The following is a 225-amino-acid chain: 3-dehydroquinate dehydratase (225 aa).

Residues serine 6, 30–32, and arginine 62 each bind 3-dehydroquinate; that span reads EWR. The active-site Proton donor/acceptor is the histidine 118. Lysine 143 functions as the Schiff-base intermediate with substrate in the catalytic mechanism. Arginine 186, serine 205, and glutamine 209 together coordinate 3-dehydroquinate.

This sequence belongs to the type-I 3-dehydroquinase family. Homodimer.

The catalysed reaction is 3-dehydroquinate = 3-dehydroshikimate + H2O. It functions in the pathway metabolic intermediate biosynthesis; chorismate biosynthesis; chorismate from D-erythrose 4-phosphate and phosphoenolpyruvate: step 3/7. Involved in the third step of the chorismate pathway, which leads to the biosynthesis of aromatic amino acids. Catalyzes the cis-dehydration of 3-dehydroquinate (DHQ) and introduces the first double bond of the aromatic ring to yield 3-dehydroshikimate. The sequence is that of 3-dehydroquinate dehydratase from Streptococcus pneumoniae (strain P1031).